A 78-amino-acid polypeptide reads, in one-letter code: Large ribosomal subunit protein bL28 (78 aa).

This sequence belongs to the bacterial ribosomal protein bL28 family.

This Prochlorococcus marinus (strain MIT 9515) protein is Large ribosomal subunit protein bL28.